A 911-amino-acid chain; its full sequence is Epithelial discoidin domain-containing receptor 1 (911 aa).

The N-terminal stretch at 1 to 19 (MGTGTLSSLLLLLLLVTIG) is a signal peptide. At 22 to 415 (DMKGHFDPAK…VAKAEGSPTA (394 aa)) the chain is on the extracellular side. In terms of domain architecture, F5/8 type C spans 32–186 (CRYALGMQDR…VCLRVELYGC (155 aa)). 2 disulfide bridges follow: Cys-32/Cys-186 and Cys-75/Cys-178. The DS-like domain stretch occupies residues 193-369 (LSYTAPVGQT…LFSEISFISD (177 aa)). Residues Asn-213, Gln-232, Asp-235, Val-237, Tyr-255, and Tyr-257 each coordinate Ca(2+). An N-linked (GlcNAc...) asparagine glycan is attached at Asn-213. N-linked (GlcNAc...) asparagine glycosylation occurs at Asn-262. The cysteines at positions 305 and 350 are disulfide-linked. Ca(2+) is bound by residues Ser-362 and Glu-363. 2 N-linked (GlcNAc...) asparagine glycosylation sites follow: Asn-372 and Asn-392. A helical membrane pass occupies residues 416 to 436 (ILIGCLVAIILLLLLIIALML). The Cytoplasmic segment spans residues 437-911 (WRLHWRRLLS…FLADDALNTV (475 aa)). A disordered region spans residues 468–496 (ILINNRPGPREPPPYQEPRPRGTPPHSAP). Residues 477–494 (REPPPYQEPRPRGTPPHS) are compositionally biased toward pro residues. A PPxY motif motif is present at residues 479–482 (PPPY). Tyr-482, Tyr-511, and Tyr-518 each carry phosphotyrosine; by autocatalysis. Residues 608–903 (LRFKEKLGEG…PPFAQLHRFL (296 aa)) enclose the Protein kinase domain. Residues 614 to 622 (LGEGQFGEV) and Lys-653 each bind ATP. Tyr-738 carries the post-translational modification Phosphotyrosine; by autocatalysis. Residue Asp-764 is the Proton acceptor of the active site. Residues Tyr-790, Tyr-794, and Tyr-795 each carry the phosphotyrosine; by autocatalysis modification.

The protein belongs to the protein kinase superfamily. Tyr protein kinase family. Insulin receptor subfamily. Homodimer. Interacts (via PPxY motif) with WWC1 (via WW domains) in a collagen-regulated manner. Forms a tripartite complex with WWC1 and PRKCZ, but predominantly in the absence of collagen. Interacts (tyrosine phosphorylated) with SHC1. Interacts with SRC. Interacts with MYH9. Interacts with CDH1. Interacts with PTPN11. Interacts with NCK2. Autophosphorylated in response to fibrillar collagen binding. In terms of tissue distribution, detected in the cochlea and the organ of Corti in the inner ear. Isoform 1 is predominant and is expressed in developing embryo and adult brain. Isoform 2 is expressed in various epithelial cells.

The protein resides in the cell membrane. The enzyme catalyses L-tyrosyl-[protein] + ATP = O-phospho-L-tyrosyl-[protein] + ADP + H(+). Its function is as follows. Tyrosine kinase that functions as a cell surface receptor for fibrillar collagen and regulates cell attachment to the extracellular matrix, remodeling of the extracellular matrix, cell migration, differentiation, survival and cell proliferation. Collagen binding triggers a signaling pathway that involves SRC and leads to the activation of MAP kinases. Regulates remodeling of the extracellular matrix by up-regulation of the matrix metalloproteinases MMP2, MMP7 and MMP9, and thereby facilitates cell migration and wound healing, but also tumor cell invasion. Promotes smooth muscle cell migration, and thereby contributes to arterial wound healing. Phosphorylates PTPN11. Required for normal blastocyst implantation during pregnancy, for normal mammary gland differentiation and normal lactation. Required for normal ear morphology and normal hearing. The sequence is that of Epithelial discoidin domain-containing receptor 1 (Ddr1) from Mus musculus (Mouse).